The sequence spans 1246 residues: Stromal processing peptidase, chloroplastic (1246 aa).

The N-terminal 136 residues, 1–136 (MASFPSPPLA…AKIRRRHVLH (136 aa)), are a transit peptide targeting the chloroplast. His228 serves as a coordination point for Zn(2+). Glu231 (proton acceptor) is an active-site residue. A Zn(2+)-binding site is contributed by His232. Glu302 is a catalytic residue. Glu309 is a binding site for Zn(2+).

This sequence belongs to the peptidase M16 family. It depends on Zn(2+) as a cofactor. As to expression, widely expressed.

The protein localises to the plastid. It is found in the chloroplast stroma. In terms of biological role, cleaves presequences (transit peptides) from chloroplastic protein precursors. Initially recognizes a precursor by binding to the C-terminus of its transit peptide and then removes the transit peptide in a single endoproteolytic step. In a next step, pursues the cleavage of transit peptide to a subfragment form. The protein is Stromal processing peptidase, chloroplastic of Oryza sativa subsp. indica (Rice).